The sequence spans 202 residues: Orotate phosphoribosyltransferase (202 aa).

5-phospho-alpha-D-ribose 1-diphosphate is bound by residues arginine 94, lysine 98, histidine 100, and 120 to 128; that span reads EDLISTGGS. Residue serine 124 coordinates orotate.

This sequence belongs to the purine/pyrimidine phosphoribosyltransferase family. PyrE subfamily. In terms of assembly, homodimer. Mg(2+) is required as a cofactor.

It carries out the reaction orotidine 5'-phosphate + diphosphate = orotate + 5-phospho-alpha-D-ribose 1-diphosphate. It participates in pyrimidine metabolism; UMP biosynthesis via de novo pathway; UMP from orotate: step 1/2. Catalyzes the transfer of a ribosyl phosphate group from 5-phosphoribose 1-diphosphate to orotate, leading to the formation of orotidine monophosphate (OMP). The polypeptide is Orotate phosphoribosyltransferase (Oceanobacillus iheyensis (strain DSM 14371 / CIP 107618 / JCM 11309 / KCTC 3954 / HTE831)).